A 76-amino-acid chain; its full sequence is Protein OPG128 (76 aa).

An intrachain disulfide couples C17 to C21.

Belongs to the orthopoxvirus OPG128 family. In terms of assembly, interacts with sulfhydryl oxidase OPG072; this interaction involves formation of a transient disulfide-bonded intermediate, allowing disulfide bond transfer. Interacts with OPG088; this interaction involves formation of a transient disulfide-bonded intermediate, allowing disulfide bond transfer.

Its function is as follows. Late protein which probably participates in disulfide bond formation by functioning as a thiol-disulfide transfer protein between membrane-associated OPG072 and OPG08. The complete pathway for formation of disulfide bonds in intracellular virion membrane proteins sequentially involves oxidation of OPG072, OPG128 and OPG08. The protein is Protein OPG128 (OPG128) of Bos taurus (Bovine).